Here is a 154-residue protein sequence, read N- to C-terminus: Ribosome maturation factor RimP (154 aa).

This sequence belongs to the RimP family.

It localises to the cytoplasm. Functionally, required for maturation of 30S ribosomal subunits. The polypeptide is Ribosome maturation factor RimP (Yersinia pseudotuberculosis serotype O:1b (strain IP 31758)).